A 673-amino-acid polypeptide reads, in one-letter code: Sodium/myo-inositol cotransporter 2 (673 aa).

Topologically, residues 1 to 27 (MESATISPQPPQSDSLEAFPQKSMEPA) are extracellular. Residues 28 to 48 (DIAVLVLYFLFVLAVGLWSTV) form a helical membrane-spanning segment. The Cytoplasmic segment spans residues 49–65 (RTKRDTVKGYFLAGGDM). The helical transmembrane segment at 66 to 88 (VWWPVGASLFASNVGSGHFIGLA) threads the bilayer. Residues 89 to 102 (GSGAAVGISVAAYE) lie on the Extracellular side of the membrane. Residues 103–123 (LNGLFSVLMLAWVFLPIYIAG) form a helical membrane-spanning segment. At 124–148 (QVTTMPEYLRRRFGGNRISITLAVL) the chain is on the cytoplasmic side. A helical transmembrane segment spans residues 149 to 169 (YLFIYIFTKISVDMYAGAIFI). The Extracellular portion of the chain corresponds to 170–180 (QQSLHLDLYLA). Residues 181-201 (IVGLLAITALYTVAGGLAAVI) form a helical membrane-spanning segment. Over 202–208 (YTDALQT) the chain is Cytoplasmic. Residues 209-229 (VIMLIGAFILMGYSFAAVGGM) form a helical membrane-spanning segment. Topologically, residues 230-272 (EGLKDQYFLALASNRSENSSCGLPREDAFHIFRDPLTSDLPWP) are extracellular. The helical transmembrane segment at 273-293 (GILFGMSIPSLWYWCTDQVIV) threads the bilayer. Over 294-308 (QRSLAAKNLSHAKGG) the chain is Cytoplasmic. A helical membrane pass occupies residues 309–329 (SLMAAYLKVLPLFLMVFPGMV). Over 330–375 (SRVLFPDQVACAHPDICQRVCSNPSGCSDIAYPKLVLELLPTGLRG) the chain is Extracellular. The helical transmembrane segment at 376 to 396 (LMMAVMVAALMSSLTSIFNSA) threads the bilayer. The Cytoplasmic segment spans residues 397–418 (STIFTMDLWNHIRPRASERELM). Residues 419-439 (IVGRIFVFALVLVSILWIPIV) form a helical membrane-spanning segment. Over 440–446 (QASQGGQ) the chain is Extracellular. A helical membrane pass occupies residues 447 to 467 (LFIYIQSISSYLQPPVAMVFI). Over 468 to 479 (MGCFWKRTNEKG) the chain is Cytoplasmic. Residues 480–500 (AFSGLILGLLLGLVRLILDFV) form a helical membrane-spanning segment. Topologically, residues 501-521 (YAQPRCDQPDDRPAVVKDVHY) are extracellular. A helical transmembrane segment spans residues 522 to 542 (LYFSMILSFTTLITVVTVSWF). The Cytoplasmic segment spans residues 543–652 (TETPSKEMVS…SLEENPLVKT (110 aa)). Residues 653–673 (LLDVNCIVCISCAIFLWGYFA) form a helical membrane-spanning segment.

It belongs to the sodium:solute symporter (SSF) (TC 2.A.21) family.

The protein localises to the membrane. Its subcellular location is the apical cell membrane. The enzyme catalyses myo-inositol(out) + 2 Na(+)(out) = myo-inositol(in) + 2 Na(+)(in). It carries out the reaction 1D-chiro-inositol(out) + 2 Na(+)(out) = 1D-chiro-inositol(in) + 2 Na(+)(in). It catalyses the reaction D-glucose(out) + 2 Na(+)(out) = D-glucose(in) + 2 Na(+)(in). The catalysed reaction is D-xylose(out) + 2 Na(+)(out) = D-xylose(in) + 2 Na(+)(in). With respect to regulation, MI transport activity inhibited by D-chiro-inositol (DCI), phlorizin (Pz) and sodium (Na(+)). Insulin increases D-chiro-inositol uptake. Its function is as follows. Involved in the sodium-dependent cotransport of myo-inositol (MI) with a Na(+):MI stoichiometry of 2:1. Exclusively responsible for apical MI transport and absorption in intestine. Can also transport D-chiro-inositol (DCI) but not L-fucose. Exhibits stereospecific cotransport of both D-glucose and D-xylose. May induce apoptosis through the TNF-alpha, PDCD1 pathway. May play a role in the regulation of MI concentration in serum, involving reabsorption in at least the proximal tubule of the kidney. The polypeptide is Sodium/myo-inositol cotransporter 2 (Mus musculus (Mouse)).